A 63-amino-acid polypeptide reads, in one-letter code: Sperm protamine P1 (63 aa).

Residues 1 to 63 (MARYRRHSRS…RYSRRGRRRY (63 aa)) are disordered.

The protein belongs to the protamine P1 family. Testis.

The protein localises to the nucleus. It localises to the chromosome. In terms of biological role, protamines substitute for histones in the chromatin of sperm during the haploid phase of spermatogenesis. They compact sperm DNA into a highly condensed, stable and inactive complex. This is Sperm protamine P1 (PRM1) from Sminthopsis bindi (Kakadu dunnart).